We begin with the raw amino-acid sequence, 445 residues long: Probable D-serine dehydratase (445 aa).

An N6-(pyridoxal phosphate)lysine modification is found at lysine 111.

The protein belongs to the serine/threonine dehydratase family. DsdA subfamily. Pyridoxal 5'-phosphate serves as cofactor.

It carries out the reaction D-serine = pyruvate + NH4(+). This is Probable D-serine dehydratase from Burkholderia pseudomallei (strain 1710b).